Reading from the N-terminus, the 735-residue chain is Phosphoribosylformylglycinamidine synthase subunit PurL (735 aa).

His49 is a catalytic residue. ATP is bound by residues Tyr52 and Lys91. Glu93 is a Mg(2+) binding site. Substrate contacts are provided by residues 94 to 97 and Arg116; that span reads SHNH. The Proton acceptor role is filled by His95. Residue Asp117 coordinates Mg(2+). Gln240 is a binding site for substrate. A Mg(2+)-binding site is contributed by Asp268. 312-314 is a substrate binding site; sequence ESQ. Positions 493 and 530 each coordinate ATP. Position 531 (Asn531) interacts with Mg(2+). Ser533 is a substrate binding site.

It belongs to the FGAMS family. In terms of assembly, monomer. Part of the FGAM synthase complex composed of 1 PurL, 1 PurQ and 2 PurS subunits.

The protein resides in the cytoplasm. The enzyme catalyses N(2)-formyl-N(1)-(5-phospho-beta-D-ribosyl)glycinamide + L-glutamine + ATP + H2O = 2-formamido-N(1)-(5-O-phospho-beta-D-ribosyl)acetamidine + L-glutamate + ADP + phosphate + H(+). It participates in purine metabolism; IMP biosynthesis via de novo pathway; 5-amino-1-(5-phospho-D-ribosyl)imidazole from N(2)-formyl-N(1)-(5-phospho-D-ribosyl)glycinamide: step 1/2. Part of the phosphoribosylformylglycinamidine synthase complex involved in the purines biosynthetic pathway. Catalyzes the ATP-dependent conversion of formylglycinamide ribonucleotide (FGAR) and glutamine to yield formylglycinamidine ribonucleotide (FGAM) and glutamate. The FGAM synthase complex is composed of three subunits. PurQ produces an ammonia molecule by converting glutamine to glutamate. PurL transfers the ammonia molecule to FGAR to form FGAM in an ATP-dependent manner. PurS interacts with PurQ and PurL and is thought to assist in the transfer of the ammonia molecule from PurQ to PurL. This Methylocella silvestris (strain DSM 15510 / CIP 108128 / LMG 27833 / NCIMB 13906 / BL2) protein is Phosphoribosylformylglycinamidine synthase subunit PurL.